Here is a 474-residue protein sequence, read N- to C-terminus: Light-independent protochlorophyllide reductase subunit N (474 aa).

Residues cysteine 22, cysteine 47, and cysteine 107 each coordinate [4Fe-4S] cluster.

It belongs to the BchN/ChlN family. As to quaternary structure, protochlorophyllide reductase is composed of three subunits; ChlL, ChlN and ChlB. Forms a heterotetramer of two ChlB and two ChlN subunits. [4Fe-4S] cluster serves as cofactor.

Its subcellular location is the plastid. It localises to the chloroplast. It catalyses the reaction chlorophyllide a + oxidized 2[4Fe-4S]-[ferredoxin] + 2 ADP + 2 phosphate = protochlorophyllide a + reduced 2[4Fe-4S]-[ferredoxin] + 2 ATP + 2 H2O. It participates in porphyrin-containing compound metabolism; chlorophyll biosynthesis (light-independent). Functionally, component of the dark-operative protochlorophyllide reductase (DPOR) that uses Mg-ATP and reduced ferredoxin to reduce ring D of protochlorophyllide (Pchlide) to form chlorophyllide a (Chlide). This reaction is light-independent. The NB-protein (ChlN-ChlB) is the catalytic component of the complex. This chain is Light-independent protochlorophyllide reductase subunit N, found in Physcomitrium patens (Spreading-leaved earth moss).